We begin with the raw amino-acid sequence, 264 residues long: Protein Saci_1508 (264 aa).

It belongs to the CinA family.

This is Protein Saci_1508 from Sulfolobus acidocaldarius (strain ATCC 33909 / DSM 639 / JCM 8929 / NBRC 15157 / NCIMB 11770).